Here is a 147-residue protein sequence, read N- to C-terminus: Deoxyuridine 5'-triphosphate nucleotidohydrolase (147 aa).

Substrate-binding positions include 67 to 69 (RSG), N80, and 84 to 86 (TID).

The protein belongs to the dUTPase family. The cofactor is Mg(2+).

The catalysed reaction is dUTP + H2O = dUMP + diphosphate + H(+). The protein operates within pyrimidine metabolism; dUMP biosynthesis; dUMP from dCTP (dUTP route): step 2/2. This enzyme is involved in nucleotide metabolism: it produces dUMP, the immediate precursor of thymidine nucleotides and it decreases the intracellular concentration of dUTP so that uracil cannot be incorporated into DNA. This chain is Deoxyuridine 5'-triphosphate nucleotidohydrolase, found in Anaeromyxobacter sp. (strain Fw109-5).